The sequence spans 2102 residues: Mediator of RNA polymerase II transcription subunit 13-like (2102 aa).

6 disordered regions span residues 304–335 (SYAG…EEAQ), 432–487 (QRAC…QPSL), 514–587 (VTSS…LDPL), 689–758 (SSAV…TTSL), 776–819 (NSDE…DLHQ), and 947–1034 (SVVE…SSVE). Residues 439–450 (GHPPSAGQPPQP) are compositionally biased toward pro residues. Residues 455–467 (KMAEKLEKGDKQQ) are compositionally biased toward basic and acidic residues. Residues 693–714 (CDEDPEQESDPYAFEEGDEEFN) show a composition bias toward acidic residues. 2 stretches are compositionally biased toward basic and acidic residues: residues 715 to 737 (FSDK…REDG) and 794 to 804 (AEEKFGGKEPK). Positions 947-974 (SVVEQEQSCTPQTHNTFMSNSAPPSNSG) are enriched in polar residues. The span at 979–990 (PSPATPRISAPT) shows a compositional bias: low complexity. Polar residues predominate over residues 1015 to 1029 (SDLNSPASTPSTCRP). Short sequence motifs (LXXLL motif) lie at residues 1165–1169 (LMLLL) and 1254–1258 (LRMLL). Disordered stretches follow at residues 1451-1574 (LTQR…DGDS) and 1948-1983 (NSPT…HDES). Low complexity-rich tracts occupy residues 1458-1467 (SSSQTSSSSS), 1476-1502 (TPTT…SSSS), and 1522-1538 (GAQG…QSAG). Residues 1542–1552 (DATSATSQPQV) show a composition bias toward polar residues. Basic and acidic residues predominate over residues 1973 to 1983 (GTDRMESHDES).

It belongs to the Mediator complex subunit 13 family. As to quaternary structure, component of the Mediator complex.

It localises to the nucleus. Functionally, component of the Mediator complex, a coactivator involved in regulated gene transcription of nearly all RNA polymerase II-dependent genes. Mediator functions as a bridge to convey information from gene-specific regulatory proteins to the basal RNA polymerase II transcription machinery. Mediator is recruited to promoters by direct interactions with regulatory proteins and serves as a scaffold for the assembly of a functional preinitiation complex with RNA polymerase II and the general transcription factors. The sequence is that of Mediator of RNA polymerase II transcription subunit 13-like from Danio rerio (Zebrafish).